We begin with the raw amino-acid sequence, 141 residues long: Acetyltransferase YPN_1354 (141 aa).

The region spanning Met-1–Tyr-141 is the N-acetyltransferase domain.

The protein belongs to the acetyltransferase family. YpeA subfamily.

The polypeptide is Acetyltransferase YPN_1354 (Yersinia pestis bv. Antiqua (strain Nepal516)).